A 125-amino-acid chain; its full sequence is Large ribosomal subunit protein bL12 (125 aa).

It belongs to the bacterial ribosomal protein bL12 family. As to quaternary structure, homodimer. Part of the ribosomal stalk of the 50S ribosomal subunit. Forms a multimeric L10(L12)X complex, where L10 forms an elongated spine to which 2 to 4 L12 dimers bind in a sequential fashion. Binds GTP-bound translation factors.

Its function is as follows. Forms part of the ribosomal stalk which helps the ribosome interact with GTP-bound translation factors. Is thus essential for accurate translation. This chain is Large ribosomal subunit protein bL12, found in Anaeromyxobacter dehalogenans (strain 2CP-1 / ATCC BAA-258).